A 303-amino-acid chain; its full sequence is Beta-lactamase L2 (303 aa).

Residues 1–35 (MLARRRFLQFSGAAVASSLALPLLARAAGKTAASA) constitute a signal peptide (tat-type signal). Ser83 (acyl-ester intermediate) is an active-site residue. 247-249 (KTG) contributes to the substrate binding site.

This sequence belongs to the class-A beta-lactamase family. Post-translationally, predicted to be exported by the Tat system. The position of the signal peptide cleavage has not been experimentally proven.

It carries out the reaction a beta-lactam + H2O = a substituted beta-amino acid. This Stenotrophomonas maltophilia (Pseudomonas maltophilia) protein is Beta-lactamase L2.